Reading from the N-terminus, the 439-residue chain is MDRISHLADEILSKILSFLGTKDVMQTMLLSKRFKSQWLLVPKLEFDDSTHLPETWGYQEPDYGNFRRFVDRSLLSREGRVLQTLFLKLGRQCSYDDIAIWVGIAVKRGLMELKLKYTDSYYPKRSSLPRSLYTCETLVVLKLKKGYLDVPDLVCLRSLKTLSLRDMNYSNASCLLRLLASCPVLEELFIQQGYYDSCALSFKIILPCLKKLSYLPKRKKKYSGIDRSEVSGGISGLVLDAPSLKYLHIVDRSGLFSVSEIININAVVKATLEVNASRPEKLLYSLVSVEHIRLCLSATEVVYPVGLGSSFHKLKRLEVCTCKSEWLDLFIHLLEDSPSLQDIKINQCHPVTNPRPQWNQPGSVPRCLSSSLETLEWVEYGGTHEEKELSTYLFKTAVCFKKASFTAKWSGGDANKKLQMLQELALSPRVSPTCELVFN.

One can recognise an F-box domain in the interval Met1–Pro61. Positions Trp358–Thr406 constitute an FBD domain.

In Arabidopsis thaliana (Mouse-ear cress), this protein is FBD-associated F-box protein At5g56380.